The following is a 239-amino-acid chain: UPF0641 membrane protein YHR140W (239 aa).

Residues 1 to 11 (MMSCLVPTRFT) lie on the Cytoplasmic side of the membrane. Residues 12–31 (LTLNTACLLTSTWGFVRATS) traverse the membrane as a helical segment. Topologically, residues 32 to 45 (VVLPPSLSKAGHKQ) are lumenal. Residues 46-66 (FLTIISIIATIINNAVNISNY) traverse the membrane as a helical segment. Residues 67-99 (YIQRNNKMNLETKKKSDFISRHVTLPVSLVLES) are Cytoplasmic-facing. A helical transmembrane segment spans residues 100–120 (IVATVYWPLRLFFVNLIMHGV). Over 121–125 (ESTAK) the chain is Lumenal. Residues 126–146 (TPFPMTVDMAIHLYPILYLLA) form a helical membrane-spanning segment. Over 147 to 162 (DHYLSGSGTKFKLSNK) the chain is Cytoplasmic. A helical transmembrane segment spans residues 163-183 (HAWLIVTSLAFSYFQYLAFLI). At 184–204 (DAGQGQAYPYPFLDVNEPYKS) the chain is on the lumenal side. The chain crosses the membrane as a helical span at residues 205–225 (IIFVVVATITWAYYVFYQKFP). Topologically, residues 226 to 239 (PKYIKKSAKKGDKN) are cytoplasmic.

The protein belongs to the UPF0641 family.

The protein localises to the endoplasmic reticulum membrane. The protein is UPF0641 membrane protein YHR140W of Saccharomyces cerevisiae (strain ATCC 204508 / S288c) (Baker's yeast).